The chain runs to 291 residues: uncharacterized protein (291 aa).

A disordered region spans residues 77–140 (TVPQSSPTAI…PPTPVVEKSP (64 aa)). Residues 125-134 (PVTPAHPPTP) show a composition bias toward pro residues.

This is an uncharacterized protein from Synechocystis sp. (strain ATCC 27184 / PCC 6803 / Kazusa).